A 150-amino-acid polypeptide reads, in one-letter code: Transcription antitermination protein NusB (150 aa).

It belongs to the NusB family.

Involved in transcription antitermination. Required for transcription of ribosomal RNA (rRNA) genes. Binds specifically to the boxA antiterminator sequence of the ribosomal RNA (rrn) operons. The polypeptide is Transcription antitermination protein NusB (Streptococcus pyogenes serotype M3 (strain ATCC BAA-595 / MGAS315)).